The following is a 446-amino-acid chain: Argininosuccinate synthase (446 aa).

Residues 17-25 and A43 contribute to the ATP site; that span reads AFSGGLDTS. Y99 contacts L-citrulline. ATP is bound by residues G129 and T131. The L-aspartate site is built by T131, N135, and D136. Residue N135 coordinates L-citrulline. ATP is bound at residue D136. L-citrulline contacts are provided by R139 and S192. Residue D194 participates in ATP binding. Residues T201, E203, and E280 each contribute to the L-citrulline site.

It belongs to the argininosuccinate synthase family. Type 2 subfamily. As to quaternary structure, homotetramer.

The protein resides in the cytoplasm. It catalyses the reaction L-citrulline + L-aspartate + ATP = 2-(N(omega)-L-arginino)succinate + AMP + diphosphate + H(+). It participates in amino-acid biosynthesis; L-arginine biosynthesis; L-arginine from L-ornithine and carbamoyl phosphate: step 2/3. The chain is Argininosuccinate synthase from Burkholderia mallei (strain NCTC 10247).